We begin with the raw amino-acid sequence, 61 residues long: Protein translocase subunit SecE (61 aa).

A helical membrane pass occupies residues 39–59 (LGILVIGLVGMLIRIIGILML).

The protein belongs to the SecE/SEC61-gamma family. As to quaternary structure, component of the Sec protein translocase complex. Heterotrimer consisting of SecY (alpha), SecG (beta) and SecE (gamma) subunits. The heterotrimers can form oligomers, although 1 heterotrimer is thought to be able to translocate proteins. Interacts with the ribosome. May interact with SecDF, and other proteins may be involved.

It is found in the cell membrane. Its function is as follows. Essential subunit of the Sec protein translocation channel SecYEG. Clamps together the 2 halves of SecY. May contact the channel plug during translocation. This is Protein translocase subunit SecE from Pyrococcus horikoshii (strain ATCC 700860 / DSM 12428 / JCM 9974 / NBRC 100139 / OT-3).